Reading from the N-terminus, the 354-residue chain is Uroporphyrinogen decarboxylase (354 aa).

Residues R27–R31, F46, D77, Y154, T209, and H327 contribute to the substrate site.

The protein belongs to the uroporphyrinogen decarboxylase family. As to quaternary structure, homodimer.

It localises to the cytoplasm. It catalyses the reaction uroporphyrinogen III + 4 H(+) = coproporphyrinogen III + 4 CO2. It functions in the pathway porphyrin-containing compound metabolism; protoporphyrin-IX biosynthesis; coproporphyrinogen-III from 5-aminolevulinate: step 4/4. In terms of biological role, catalyzes the decarboxylation of four acetate groups of uroporphyrinogen-III to yield coproporphyrinogen-III. The sequence is that of Uroporphyrinogen decarboxylase from Pseudomonas putida (strain ATCC 47054 / DSM 6125 / CFBP 8728 / NCIMB 11950 / KT2440).